Consider the following 354-residue polypeptide: Arginase (354 aa).

H136, D159, H161, and D163 together coordinate Mn(2+). L-arginine contacts are provided by N165, S172, and D217. Mn(2+) contacts are provided by D266 and D268.

It belongs to the arginase family. In terms of assembly, homotrimer; oligomerization is dependent on Mn(2+) binding. Requires Mn(2+) as cofactor.

The catalysed reaction is L-arginine + H2O = urea + L-ornithine. It participates in nitrogen metabolism; urea cycle; L-ornithine and urea from L-arginine: step 1/1. Functionally, catalyzes the hydrolysis of L-arginine into urea and L-ornithine, which is a precursor for polyamine biosynthesis. May play a role in parasite intra-hepatic development during the host liver stage. This Plasmodium berghei (strain Anka) protein is Arginase.